The chain runs to 394 residues: Phosphopentomutase (394 aa).

6 residues coordinate Mn(2+): D14, D287, H292, D328, H329, and H340.

This sequence belongs to the phosphopentomutase family. It depends on Mn(2+) as a cofactor.

The protein resides in the cytoplasm. It catalyses the reaction 2-deoxy-alpha-D-ribose 1-phosphate = 2-deoxy-D-ribose 5-phosphate. The enzyme catalyses alpha-D-ribose 1-phosphate = D-ribose 5-phosphate. The protein operates within carbohydrate degradation; 2-deoxy-D-ribose 1-phosphate degradation; D-glyceraldehyde 3-phosphate and acetaldehyde from 2-deoxy-alpha-D-ribose 1-phosphate: step 1/2. In terms of biological role, isomerase that catalyzes the conversion of deoxy-ribose 1-phosphate (dRib-1-P) and ribose 1-phosphate (Rib-1-P) to deoxy-ribose 5-phosphate (dRib-5-P) and ribose 5-phosphate (Rib-5-P), respectively. This Shouchella clausii (strain KSM-K16) (Alkalihalobacillus clausii) protein is Phosphopentomutase.